The following is a 1322-amino-acid chain: MNRIDEEPQIHEDPVENREEDDEDEDDQYEFDDGFLVNGSDDGEEEEEQRHCSEKKSRSRRKKDESFTLHEDDYLLLKDNNDTFQRNKYKRLKKSSEEEDKINNDDDDDDLSHFIVDEDDHGAQGMRRKKMKYKQGTDSNALRYANDVFGDPEELLKLRKKDLKYNEKIERKLEDEFEPMVLSEKYMTEKDDEIRKLDVPERMQIFEEAIGIVSLDDMSIQEESNWIYARLLQEQGQGCLINKDDIVKFLEMFHVQKLEIPFIAMYRKEQCRSLLDSSDDDHDGSDFNLDKKLETKWHKVLWMIQDLDRKWVLLRKRKTALFGYYTKRFEEETCMSDLNKSLFESVIKSLQAAETEREVDDVDSKFNLHFPHCEIDEGQYKRPNRKSQYSICSKFGIKEFANKFGYSAEQLGLALSLEKVFVDELEDAKKTPEEMALNYECAMFGDSQAVLKGARHMAAVEISCEPSIRKYVRGIFMENAVVSTSPTPDGNVVIDSFHRFSAVKWLSEKPLRKFDGVQWLLIQKAEEEKLLQVTFKLPENQMNRIISECSEHYLSVGVSKYAQLWNEQRKLILEDAVHGFVLPSMEKEARSLLTSRAKTQLLSEYGQVLWNKVSSGPYRRNNNTSEEEAAPRVLACCWGPGNPETTFVMLDSSGELVDVLYSGSIGLRSRDVNDQKRKKMDQDRFLKFIRDHQPDVLALAAVNLSCVRLKDEIYEAIFQMVEELPLNYVDDRIYDFPLVYADESLPRLYENSRISSEQLPQQAGIVKRAVSLGRYLQNPLAMISTLCGPGRDILSWKLHSFQDFLDPDEKYEMVEQVMVDITNQVGIDINLAASHEWLFSPLQFVSGLGPRKAASLQKSLVRAGSIFVRKELINHGIGKKVFVNAAGFLRIRRSGLACSSSQFIDLLDDTRIHPESYGLAQELAKDVYAHDTVRGDEDDAIEMAIEHVRDEPASLRKIVLDEYLRSKNQENKKETYSLIMRELSCGFQDWRSLFKEVDSDEEFYMISGETKETIGEGRIVQATVKKVTSGKAKCVLDCGLPGILLKEDYSDDGRDIVDLSNKLCEGDIVTCKVKSILKQRYHVLLVCKESEMRKHRNLGDVDDYYHEEKRNSVLIEKEKVPKEKKQFKSRMIVHPRFQNITAEQATVYLSDKNIGESIVRPSSRGLNHLTLMIKISDNVYANKEIIEGEKENKDIVSLQRIGKTLKIGNETFEDLDEVMDRYVDPLVTHLMTMLNHRKFRTGTKSEIDDLLRVEKGVNPKMVVYSFGVSHEHPGSFILSYIRSANPHHEYIGLYPKGFKFRKRMFGDLDKLAAYFKRHIDNQ.

The segment covering 1-17 (MNRIDEEPQIHEDPVEN) has biased composition (basic and acidic residues). 2 disordered regions span residues 1–65 (MNRI…KKDE) and 90–113 (KRLK…DLSH). The span at 18–33 (REEDDEDEDDQYEFDD) shows a compositional bias: acidic residues. Basic and acidic residues predominate over residues 48-65 (EQRHCSEKKSRSRRKKDE). Residues 97–110 (EEEDKINNDDDDDD) are compositionally biased toward acidic residues. Residues 1017–1088 (GRIVQATVKK…QRYHVLLVCK (72 aa)) form the S1 motif domain.

The protein belongs to the SPT6 family.

It localises to the nucleus. Its function is as follows. Transcription elongation factor that enhances the transcription elongation by RNA polymerase II (RNAPII). This chain is Transcription elongation factor SPT6-like, found in Arabidopsis thaliana (Mouse-ear cress).